A 273-amino-acid chain; its full sequence is Putative phosphoenolpyruvate synthase regulatory protein (273 aa).

ADP is bound at residue 153 to 160 (GVSRSGKT).

The protein belongs to the pyruvate, phosphate/water dikinase regulatory protein family. PSRP subfamily.

It carries out the reaction [pyruvate, water dikinase] + ADP = [pyruvate, water dikinase]-phosphate + AMP + H(+). The enzyme catalyses [pyruvate, water dikinase]-phosphate + phosphate + H(+) = [pyruvate, water dikinase] + diphosphate. Functionally, bifunctional serine/threonine kinase and phosphorylase involved in the regulation of the phosphoenolpyruvate synthase (PEPS) by catalyzing its phosphorylation/dephosphorylation. The polypeptide is Putative phosphoenolpyruvate synthase regulatory protein (Paracidovorax citrulli (strain AAC00-1) (Acidovorax citrulli)).